The primary structure comprises 356 residues: Protein-arginine kinase (356 aa).

The Phosphagen kinase C-terminal domain maps to 24-254 (IVLSTRIRLA…HQLIQQEKAA (231 aa)). ATP is bound by residues 27–31 (STRIR), H92, R125, 176–180 (RASVM), and 207–212 (RGIYGE). The RDXXRA motif of the pArg binding pocket involved in allosteric regulation signature appears at 337-342 (RDYRRA).

Belongs to the ATP:guanido phosphotransferase family.

The catalysed reaction is L-arginyl-[protein] + ATP = N(omega)-phospho-L-arginyl-[protein] + ADP + H(+). With respect to regulation, appears to be allosterically activated by the binding of pArg-containing polypeptides to the pArg-binding pocket localized in the C-terminal domain of McsB. In terms of biological role, catalyzes the specific phosphorylation of arginine residues in a large number of proteins. Is part of the bacterial stress response system. Protein arginine phosphorylation has a physiologically important role and is involved in the regulation of many critical cellular processes, such as protein homeostasis, motility, competence, and stringent and stress responses, by regulating gene expression and protein activity. The chain is Protein-arginine kinase from Bacillus cytotoxicus (strain DSM 22905 / CIP 110041 / 391-98 / NVH 391-98).